A 192-amino-acid chain; its full sequence is Peroxiredoxin tpx1 (192 aa).

The region spanning 3-161 is the Thioredoxin domain; sequence LQIGKPAPDF…ALRLLDAFQF (159 aa). Catalysis depends on cysteine 48, which acts as the Cysteine sulfenic acid (-SOH) intermediate. 2 positions are modified to phosphoserine: serine 105 and serine 148.

The protein belongs to the peroxiredoxin family. AhpC/Prx1 subfamily. Homodimer; disulfide-linked, upon oxidation. Interacts with srx1 in response to oxidative stress. Interacts with pap1 via transient disulfide linkages. The enzyme can be inactivated by further oxidation of the cysteine sulfenic acid (C(P)-SOH) to sulphinic acid (C(P)-SO2H) instead of its condensation to a disulfide bond. It can be reactivated by forming a transient disulfide bond with sulfiredoxin srx1, which reduces the cysteine sulfinic acid in an ATP- and Mg-dependent manner.

It is found in the cytoplasm. The protein localises to the nucleus. The catalysed reaction is a hydroperoxide + [thioredoxin]-dithiol = an alcohol + [thioredoxin]-disulfide + H2O. Its function is as follows. Thiol-specific peroxidase that catalyzes the reduction of hydrogen peroxide and organic hydroperoxides to water and alcohols, respectively. Plays a role in cell protection against oxidative stress by detoxifying peroxides and as sensor of hydrogen peroxide-mediated signaling events. Relays hydrogen peroxide as a signal to the transcription factor pap1 by inducing the formation of intramolecular disulfide bonds in pap1, which causes its nuclear accumulation and activation. Reduced by srx1 and this regulation acts as a molecular switch controlling the transcriptional response to hydrogen peroxide. This is Peroxiredoxin tpx1 (tpx1) from Schizosaccharomyces pombe (strain 972 / ATCC 24843) (Fission yeast).